Consider the following 223-residue polypeptide: uncharacterized protein (223 aa).

4 helical membrane-spanning segments follow: residues 22 to 42 (LTVGLFVITFFNPGANLFVVV), 59 to 79 (GVALGDAFYSGLGLFGLATLI), 85 to 105 (IFSLIRIVGGAYLLWFAWCSM), and 164 to 184 (MAWAGIVLASIIWRVFLSQAF).

This sequence belongs to the Rht family.

It localises to the cell membrane. This is an uncharacterized protein from Escherichia coli (strain K12).